The following is a 405-amino-acid chain: Serine/threonine-protein kinase 2 (405 aa).

The 352-residue stretch at asparagine 54 to asparagine 405 folds into the Protein kinase domain. ATP contacts are provided by residues isoleucine 60–valine 68 and lysine 84. The active-site Proton acceptor is aspartate 274.

The protein belongs to the protein kinase superfamily. Ser/Thr protein kinase family. Poxviruses subfamily. Phosphorylated in vivo. Autophosphorylated in vitro.

The protein localises to the host endoplasmic reticulum. It localises to the host endoplasmic reticulum-Golgi intermediate compartment. It carries out the reaction L-seryl-[protein] + ATP = O-phospho-L-seryl-[protein] + ADP + H(+). It catalyses the reaction L-threonyl-[protein] + ATP = O-phospho-L-threonyl-[protein] + ADP + H(+). Functionally, essential serine-protein kinase involved in the early stage of virion morphogenesis. This Vaccinia virus (strain L-IVP) (VACV) protein is Serine/threonine-protein kinase 2 (OPG054).